A 207-amino-acid chain; its full sequence is N-(5'-phosphoribosyl)anthranilate isomerase (207 aa).

This sequence belongs to the TrpF family.

It carries out the reaction N-(5-phospho-beta-D-ribosyl)anthranilate = 1-(2-carboxyphenylamino)-1-deoxy-D-ribulose 5-phosphate. It participates in amino-acid biosynthesis; L-tryptophan biosynthesis; L-tryptophan from chorismate: step 3/5. This is N-(5'-phosphoribosyl)anthranilate isomerase from Stutzerimonas stutzeri (strain A1501) (Pseudomonas stutzeri).